The chain runs to 166 residues: Short form salivary protein D7R5 (166 aa).

The first 22 residues, 1–22 (MEWRYFVVIALICPLIIVETLA), serve as a signal peptide directing secretion. 3 cysteine pairs are disulfide-bonded: Cys26–Cys58, Cys39–Cys166, and Cys98–Cys117.

The protein belongs to the PBP/GOBP family.

It localises to the secreted. In contrast to the related D7 salivary proteins, does not bind biogenic amines such as serotonin, noradrenaline, histamine and adrenaline. It is hypothesized that either D7r5 evolved an as yet unknown function or is becoming a pseudogene. This chain is Short form salivary protein D7R5, found in Anopheles gambiae (African malaria mosquito).